Here is a 241-residue protein sequence, read N- to C-terminus: Small ribosomal subunit protein uS3c (241 aa).

It belongs to the universal ribosomal protein uS3 family. In terms of assembly, part of the 30S ribosomal subunit.

The protein localises to the plastid. The protein is Small ribosomal subunit protein uS3c (rps3) of Helicosporidium sp. subsp. Simulium jonesii (Green alga).